The following is a 546-amino-acid chain: Chaperonin GroEL (546 aa).

Residues 30–33 (TLGP), K51, 87–91 (DGTTT), G415, 479–481 (NAA), and D495 each bind ATP.

Belongs to the chaperonin (HSP60) family. Forms a cylinder of 14 subunits composed of two heptameric rings stacked back-to-back. Interacts with the co-chaperonin GroES.

The protein resides in the cytoplasm. The catalysed reaction is ATP + H2O + a folded polypeptide = ADP + phosphate + an unfolded polypeptide.. Functionally, together with its co-chaperonin GroES, plays an essential role in assisting protein folding. The GroEL-GroES system forms a nano-cage that allows encapsulation of the non-native substrate proteins and provides a physical environment optimized to promote and accelerate protein folding. The chain is Chaperonin GroEL from Azotobacter vinelandii.